A 101-amino-acid polypeptide reads, in one-letter code: Replication restart protein PriB (101 aa).

Residues 1 to 101 (MATNHLVLSG…LHAENVELKT (101 aa)) form the SSB domain.

It belongs to the PriB family. As to quaternary structure, homodimer. Interacts with PriA and DnaT. Component of the replication restart primosome. Primosome assembly occurs via a 'hand-off' mechanism. PriA binds to replication forks, subsequently PriB then DnaT bind; DnaT then displaces ssDNA to generate the helicase loading substrate.

Its function is as follows. Involved in the restart of stalled replication forks, which reloads the replicative helicase on sites other than the origin of replication; the PriA-PriB pathway is the major replication restart pathway. During primosome assembly it facilitates complex formation between PriA and DnaT on DNA; stabilizes PriA on DNA. Stimulates the DNA unwinding activity of PriA helicase. The chain is Replication restart protein PriB from Shewanella woodyi (strain ATCC 51908 / MS32).